The primary structure comprises 702 residues: MSFHHLCSSPSSLLHDPLPLCNLLSVYPKSTPRSFLSSYNPNSSHFHSRNLLQATHVSVQEAIPQSEKSKLVDVDLPIPEPTASKSYVWVNPKSPRASQLRRKSYDSRYSSLIKLAESLDACKPNEADVCDVITGFGGKLFEQDAVVTLNNMTNPETAPLVLNNLLETMKPSREVILYNVTMKVFRKSKDLEKSEKLFDEMLERGIKPDNATFTTIISCARQNGVPKRAVEWFEKMSSFGCEPDNVTMAAMIDAYGRAGNVDMALSLYDRARTEKWRIDAVTFSTLIRIYGVSGNYDGCLNIYEEMKALGVKPNLVIYNRLIDSMGRAKRPWQAKIIYKDLITNGFTPNWSTYAALVRAYGRARYGDDALAIYREMKEKGLSLTVILYNTLLSMCADNRYVDEAFEIFQDMKNCETCDPDSWTFSSLITVYACSGRVSEAEAALLQMREAGFEPTLFVLTSVIQCYGKAKQVDDVVRTFDQVLELGITPDDRFCGCLLNVMTQTPSEEIGKLIGCVEKAKPKLGQVVKMLVEEQNCEEGVFKKEASELIDSIGSDVKKAYLNCLIDLCVNLNKLERACEILQLGLEYDIYTGLQSKSATQWSLHLKSLSLGAALTALHVWMNDLSEAALESGEEFPPLLGINTGHGKHKYSDKGLAAVFESHLKELNAPFHEAPDKVGWFLTTSVAAKAWLESRRSAGGVSA.

Residues 1–53 constitute a chloroplast transit peptide; sequence MSFHHLCSSPSSLLHDPLPLCNLLSVYPKSTPRSFLSSYNPNSSHFHSRNLLQ. 9 PPR repeats span residues 174 to 208, 209 to 243, 244 to 278, 279 to 313, 314 to 348, 349 to 383, 384 to 414, 420 to 454, and 455 to 489; these read EVILYNVTMKVFRKSKDLEKSEKLFDEMLERGIKP, DNATFTTIISCARQNGVPKRAVEWFEKMSSFGCEP, DNVTMAAMIDAYGRAGNVDMALSLYDRARTEKWRI, DAVTFSTLIRIYGVSGNYDGCLNIYEEMKALGVKP, NLVIYNRLIDSMGRAKRPWQAKIIYKDLITNGFTP, NWSTYAALVRAYGRARYGDDALAIYREMKEKGLSL, TVILYNTLLSMCADNRYVDEAFEIFQDMKNC, DSWTFSSLITVYACSGRVSEAEAALLQMREAGFEP, and TLFVLTSVIQCYGKAKQVDDVVRTFDQVLELGITP. One can recognise a Smr domain in the interval 603-688; the sequence is LHLKSLSLGA…WFLTTSVAAK (86 aa).

It belongs to the PPR family. P subfamily. Expressed in leaves and flowers and at lower levels in stems and flower buds.

The protein resides in the plastid. It localises to the chloroplast. Functionally, involved in chloroplast RNA processing. Can bind RNA. Involved in chloroplast development. Involved in chloroplast ribosomal RNA (rRNA) processing and/or translation. Required for FtsH-mediated chloroplast biogenesis. Involved in translation and accumulation of chloroplast ATP synthase subunits. This is Pentatricopeptide repeat-containing protein At4g16390, chloroplastic from Arabidopsis thaliana (Mouse-ear cress).